A 302-amino-acid polypeptide reads, in one-letter code: Dermonecrotic toxin LiSicTox-alphaIA1bii (302 aa).

Positions 1-14 are cleaved as a signal peptide; sequence ARVVLGCWSVLSQA. Residues 15-22 constitute a propeptide that is removed on maturation; sequence AQTDDEER. H34 is an active-site residue. Mg(2+) contacts are provided by E54 and D56. The active-site Nucleophile is the H70. 2 cysteine pairs are disulfide-bonded: C74–C80 and C76–C219. D114 lines the Mg(2+) pocket.

The protein belongs to the arthropod phospholipase D family. Class II subfamily. Class IIa sub-subfamily. It depends on Mg(2+) as a cofactor. Expressed by the venom gland.

Its subcellular location is the secreted. It catalyses the reaction an N-(acyl)-sphingosylphosphocholine = an N-(acyl)-sphingosyl-1,3-cyclic phosphate + choline. The catalysed reaction is an N-(acyl)-sphingosylphosphoethanolamine = an N-(acyl)-sphingosyl-1,3-cyclic phosphate + ethanolamine. It carries out the reaction a 1-acyl-sn-glycero-3-phosphocholine = a 1-acyl-sn-glycero-2,3-cyclic phosphate + choline. The enzyme catalyses a 1-acyl-sn-glycero-3-phosphoethanolamine = a 1-acyl-sn-glycero-2,3-cyclic phosphate + ethanolamine. Dermonecrotic toxins cleave the phosphodiester linkage between the phosphate and headgroup of certain phospholipids (sphingolipid and lysolipid substrates), forming an alcohol (often choline) and a cyclic phosphate. This toxin acts on sphingomyelin (SM). It may also act on ceramide phosphoethanolamine (CPE), lysophosphatidylcholine (LPC) and lysophosphatidylethanolamine (LPE), but not on lysophosphatidylserine (LPS), and lysophosphatidylglycerol (LPG). It acts by transphosphatidylation, releasing exclusively cyclic phosphate products as second products. Induces hemolysis, dermonecrosis, vascular permeability and platelet aggregation. The polypeptide is Dermonecrotic toxin LiSicTox-alphaIA1bii (Loxosceles intermedia (Brown spider)).